The primary structure comprises 423 residues: AP-1 complex subunit mu-2 (423 aa).

One can recognise an MHD domain in the interval 168-421; that stretch reads KNEVFIDVIE…ITQSGDYQLR (254 aa).

Belongs to the adaptor complexes medium subunit family. Adaptor protein complex 1 (AP-1) is a heterotetramer composed of two large adaptins (gamma-type subunit AP1G1 and beta-type subunit AP1B1), a medium adaptin (mu-type subunit AP1M1 or AP1M2) and a small adaptin (sigma-type subunit AP1S1 or AP1S2 or AP1S3). Interacts with P2X4. Phosphorylation of membrane-bound AP1M1/AP1M2 increases its affinity for sorting signals.

Its subcellular location is the golgi apparatus. It is found in the cytoplasmic vesicle. The protein resides in the clathrin-coated vesicle membrane. Subunit of clathrin-associated adaptor protein complex 1 that plays a role in protein sorting in the trans-Golgi network (TGN) and endosomes. The AP complexes mediate the recruitment of clathrin to membranes and the recognition of sorting signals within the cytosolic tails of transmembrane cargo molecules. This is AP-1 complex subunit mu-2 (Ap1m2) from Mus musculus (Mouse).